We begin with the raw amino-acid sequence, 233 residues long: Sugar fermentation stimulation protein homolog (233 aa).

It belongs to the SfsA family.

The protein is Sugar fermentation stimulation protein homolog of Rhodospirillum centenum (strain ATCC 51521 / SW).